The sequence spans 276 residues: UPF0276 protein Caul_0757 (276 aa).

The protein belongs to the UPF0276 family.

This chain is UPF0276 protein Caul_0757, found in Caulobacter sp. (strain K31).